The chain runs to 469 residues: 3-isopropylmalate dehydratase large subunit (469 aa).

[4Fe-4S] cluster contacts are provided by cysteine 350, cysteine 410, and cysteine 413.

It belongs to the aconitase/IPM isomerase family. LeuC type 1 subfamily. In terms of assembly, heterodimer of LeuC and LeuD. It depends on [4Fe-4S] cluster as a cofactor.

The catalysed reaction is (2R,3S)-3-isopropylmalate = (2S)-2-isopropylmalate. The protein operates within amino-acid biosynthesis; L-leucine biosynthesis; L-leucine from 3-methyl-2-oxobutanoate: step 2/4. Functionally, catalyzes the isomerization between 2-isopropylmalate and 3-isopropylmalate, via the formation of 2-isopropylmaleate. This chain is 3-isopropylmalate dehydratase large subunit, found in Allorhizobium ampelinum (strain ATCC BAA-846 / DSM 112012 / S4) (Agrobacterium vitis (strain S4)).